The chain runs to 129 residues: M-zodatoxin-Lt8e (129 aa).

The first 20 residues, 1–20, serve as a signal peptide directing secretion; sequence MKYFVVALALVAAFVCIAES. Positions 21 to 60 are excised as a propeptide; the sequence is KPAESEHELAEVEEENELADLEDAVWLEHLADLSDLEEAR. The Processing quadruplet motif motif lies at 57-60; that stretch reads EEAR.

Post-translationally, cleavage of the propeptide depends on the processing quadruplet motif (XXXR, with at least one of X being E). Expressed by the venom gland.

The protein localises to the secreted. Insecticidal, cytolytic and antimicrobial peptide. Forms voltage-dependent, ion-permeable channels in membranes. At high concentration causes cell membrane lysis. The chain is M-zodatoxin-Lt8e (cit 1-5) from Lachesana tarabaevi (Spider).